Consider the following 441-residue polypeptide: Glutamate--tRNA ligase 2 (441 aa).

A 'HIGH' region motif is present at residues 8-18; the sequence is PSPTGYIHVGN. The short motif at 239 to 243 is the 'KMSKS' region element; the sequence is ALSKR. Lys242 contacts ATP.

The protein belongs to the class-I aminoacyl-tRNA synthetase family. Glutamate--tRNA ligase type 1 subfamily. Monomer.

It localises to the cytoplasm. The catalysed reaction is tRNA(Glu) + L-glutamate + ATP = L-glutamyl-tRNA(Glu) + AMP + diphosphate. Its function is as follows. Catalyzes the attachment of glutamate to tRNA(Glu) in a two-step reaction: glutamate is first activated by ATP to form Glu-AMP and then transferred to the acceptor end of tRNA(Glu). This is Glutamate--tRNA ligase 2 from Ruegeria sp. (strain TM1040) (Silicibacter sp.).